Here is a 296-residue protein sequence, read N- to C-terminus: Thymidylate synthase (296 aa).

DUMP contacts are provided by residues Arg-24 and Arg-151 to Arg-152. Cys-171 functions as the Nucleophile in the catalytic mechanism. Residues Arg-197 to Asp-200, Asn-208, and His-238 to Tyr-240 contribute to the dUMP site. Asp-200 contacts (6R)-5,10-methylene-5,6,7,8-tetrahydrofolate.

The protein belongs to the thymidylate synthase family. As to quaternary structure, homodimer.

The catalysed reaction is dUMP + (6R)-5,10-methylene-5,6,7,8-tetrahydrofolate = 7,8-dihydrofolate + dTMP. It functions in the pathway pyrimidine metabolism; dTTP biosynthesis. This chain is Thymidylate synthase (tms1), found in Agaricus bisporus (White button mushroom).